A 315-amino-acid polypeptide reads, in one-letter code: Methionyl-tRNA formyltransferase (315 aa).

107–110 (SLLP) is a binding site for (6S)-5,6,7,8-tetrahydrofolate.

The protein belongs to the Fmt family.

The catalysed reaction is L-methionyl-tRNA(fMet) + (6R)-10-formyltetrahydrofolate = N-formyl-L-methionyl-tRNA(fMet) + (6S)-5,6,7,8-tetrahydrofolate + H(+). Its function is as follows. Attaches a formyl group to the free amino group of methionyl-tRNA(fMet). The formyl group appears to play a dual role in the initiator identity of N-formylmethionyl-tRNA by promoting its recognition by IF2 and preventing the misappropriation of this tRNA by the elongation apparatus. The polypeptide is Methionyl-tRNA formyltransferase (Borrelia garinii subsp. bavariensis (strain ATCC BAA-2496 / DSM 23469 / PBi) (Borreliella bavariensis)).